A 638-amino-acid polypeptide reads, in one-letter code: Nucleolar protein 4 (638 aa).

4 disordered regions span residues 210-312 (QQDE…SPLS), 343-403 (EREA…TDGV), 503-535 (NAAKRMRLERQQDESAPADKQCKPEATQATYST), and 573-603 (SSGPTDLSMKRQLATSSGSSSSSNSRPQLSP). Positions 211–225 (QDEDESSIESDEFDM) are enriched in acidic residues. 4 stretches are compositionally biased toward polar residues: residues 229 to 254 (TRMSAVNSDLSSNLEERMQSPQNLHG), 263 to 281 (ESFNGNETLGHSSIASGGT), 302 to 312 (QPLNLSDSPLS), and 351 to 363 (SKSPAHSYSSYDS). Composition is skewed to basic and acidic residues over residues 364–374 (GKNESVDRGAE), 391–403 (HDDSEKVNETDGV), and 503–515 (NAAKRMRLERQQD). Over residues 588-597 (SSGSSSSSNS) the composition is skewed to low complexity.

As to expression, expressed predominantly in fetal brain, adult brain and testis.

The protein resides in the nucleus. It is found in the nucleolus. The protein is Nucleolar protein 4 (NOL4) of Homo sapiens (Human).